We begin with the raw amino-acid sequence, 684 residues long: Cleavage and polyadenylation specificity factor subunit 3 (684 aa).

Serine 2 bears the N-acetylserine mark. The Zn(2+) site is built by histidine 71, histidine 73, aspartate 75, histidine 76, histidine 158, and aspartate 179. Histidine 396 (proton donor) is an active-site residue. Residue histidine 418 participates in Zn(2+) binding. Residues lysine 462, lysine 465, and lysine 545 each participate in a glycyl lysine isopeptide (Lys-Gly) (interchain with G-Cter in SUMO) cross-link. Serine 659 carries the phosphoserine modification. The residue at position 681 (threonine 681) is a Phosphothreonine.

The protein belongs to the metallo-beta-lactamase superfamily. RNA-metabolizing metallo-beta-lactamase-like family. CPSF3 subfamily. As to quaternary structure, component of the cleavage and polyadenylation specificity factor (CPSF) complex, composed of CPSF1, CPSF2, CPSF3, CPSF4 and FIP1L1. Interacts with CPSF2, CSTF2 and SYMPK. Interacts with TUT1; the interaction is direct and mediates the recruitment of the CPSF complex on the 3'UTR of pre-mRNAs. Interacts with WDR33. Interacts with ZC3H3. Requires Zn(2+) as cofactor. In terms of processing, sumoylated on Lys-462, Lys-465 and Lys-545, preferentially by SUMO3.

The protein resides in the nucleus. Functionally, component of the cleavage and polyadenylation specificity factor (CPSF) complex that plays a key role in pre-mRNA 3'-end formation, recognizing the AAUAAA signal sequence and interacting with poly(A) polymerase and other factors to bring about cleavage and poly(A) addition. Has endonuclease activity, and functions as an mRNA 3'-end-processing endonuclease. Also involved in the histone 3'-end pre-mRNA processing. U7 snRNP-dependent protein that induces both the 3'-endoribonucleolytic cleavage of histone pre-mRNAs and acts as a 5' to 3' exonuclease for degrading the subsequent downstream cleavage product (DCP) of mature histone mRNAs. Cleavage occurs after the 5'-ACCCA-3' sequence in the histone pre-mRNA leaving a 3'hydroxyl group on the upstream fragment containing the stem loop (SL) and 5' phosphate on the downstream cleavage product (DCP) starting with CU nucleotides. The U7-dependent 5' to 3' exonuclease activity is processive and degrades the DCP RNA substrate even after complete removal of the U7-binding site. Binds to the downstream cleavage product (DCP) of histone pre-mRNAs and the cleaved DCP RNA substrate in a U7 snRNP dependent manner. Required for entering/progressing through S-phase of the cell cycle. Required for the selective processing of microRNAs (miRNAs) during embryonic stem cell differentiation via its interaction with ISY1. Required for the biogenesis of all miRNAs from the pri-miR-17-92 primary transcript except miR-92a. Only required for the biogenesis of miR-290 and miR-96 from the pri-miR-290-295 and pri-miR-96-183 primary transcripts, respectively. In Homo sapiens (Human), this protein is Cleavage and polyadenylation specificity factor subunit 3 (CPSF3).